Reading from the N-terminus, the 66-residue chain is Ocellatin-PT1 (66 aa).

A signal peptide spans 1-22; the sequence is MAFLKKSLFLVLFLGLVSLSIC. Positions 23–39 are excised as a propeptide; sequence DEEKRQDEDDDDDDDEE. The residue at position 66 (valine 66) is a Valine amide.

Expressed by the skin glands.

The protein localises to the secreted. Functionally, has antibacterial activity against Gram-negative bacterium E.coli ATCC 25922 (MIC=300 uM) but not against S.pneumoniae ATCC 700603, S.choleraesuis ATCC 14028 or Gram-positive bacterium S.aureus ATCC 29313. Shows virtually no hemolytic activity and no cytotoxicity. In Leptodactylus pustulatus (Ceara white-lipped frog), this protein is Ocellatin-PT1.